Here is a 138-residue protein sequence, read N- to C-terminus: Large ribosomal subunit protein uL16 (138 aa).

It belongs to the universal ribosomal protein uL16 family. As to quaternary structure, part of the 50S ribosomal subunit.

Binds 23S rRNA and is also seen to make contacts with the A and possibly P site tRNAs. This is Large ribosomal subunit protein uL16 from Rubrobacter xylanophilus (strain DSM 9941 / JCM 11954 / NBRC 16129 / PRD-1).